The chain runs to 690 residues: Heterogeneous nuclear ribonucleoprotein M (690 aa).

Residues 1–13 show a composition bias toward low complexity; the sequence is MAAGVEAAAEVAA. Residues 1-63 are disordered; it reads MAAGVEAAAE…KRGGNRFEPY (63 aa). The residue at position 2 (A2) is an N-acetylalanine. Residue K17 forms a Glycyl lysine isopeptide (Lys-Gly) (interchain with G-Cter in SUMO2) linkage. Phosphoserine is present on S29. Glycyl lysine isopeptide (Lys-Gly) (interchain with G-Cter in SUMO2) cross-links involve residues K37, K68, and K82. The segment covering 37-49 has biased composition (basic and acidic residues); sequence KGEERPTQNEKRK. 2 RRM domains span residues 70–148 and 164–241; these read YRAF…EDPD and STVF…MDER. S85 bears the Phosphoserine mark. Residues K87 and K126 each participate in a glycyl lysine isopeptide (Lys-Gly) (interchain with G-Cter in SUMO2) cross-link. K133 bears the N6-acetyllysine; alternate mark. K133 participates in a covalent cross-link: Glycyl lysine isopeptide (Lys-Gly) (interchain with G-Cter in SUMO2); alternate. Glycyl lysine isopeptide (Lys-Gly) (interchain with G-Cter in SUMO2) cross-links involve residues K142 and K144. S164 bears the Phosphoserine mark. K181 is covalently cross-linked (Glycyl lysine isopeptide (Lys-Gly) (interchain with G-Cter in SUMO2)). N6-acetyllysine; alternate is present on K237. Residue K237 forms a Glycyl lysine isopeptide (Lys-Gly) (interchain with G-Cter in SUMO2); alternate linkage. Residues K245 and K305 each participate in a glycyl lysine isopeptide (Lys-Gly) (interchain with G-Cter in SUMO2) cross-link. Phosphoserine is present on residues S325 and S337. Residues K341 and K348 each participate in a glycyl lysine isopeptide (Lys-Gly) (interchain with G-Cter in SUMO2) cross-link. A Phosphoserine modification is found at S357. Tandem repeats lie at residues 360–365, 367–372, 375–380, and 386–391. Positions 360–568 are 27 X 6 AA repeats of [GEVSTPAN]-[ILMV]-[DE]-[RH]-[MLVI]-[GAV]; the sequence is GIERMGPGID…ALGAGIERMG (209 aa). At S392 the chain carries Phosphoserine. 3 tandem repeats follow at residues 393–398, 400–405, and 406–411. S412 carries the post-translational modification Phosphoserine. Tandem repeats lie at residues 413–418, 421–426, 428–433, and 435–440. Phosphoserine is present on S428. S441 carries the post-translational modification Phosphoserine. A run of 16 repeats spans residues 442-447, 453-458, 460-465, 467-472, 474-479, 481-486, 488-493, 500-505, 507-512, 514-519, 522-527, 528-532, 535-540, 541-545, 548-553, and 563-568. Residue R456 is modified to Omega-N-methylarginine. At S488 the chain carries Phosphoserine. The residue at position 535 (S535) is a Phosphoserine. At S548 the chain carries Phosphoserine. S578, S593, and S597 each carry phosphoserine. Residue K611 forms a Glycyl lysine isopeptide (Lys-Gly) (interchain with G-Cter in SUMO2) linkage. The 77-residue stretch at 613-689 folds into the RRM 3 domain; the sequence is CQIFVRNLPF…REIDVRIDRN (77 aa). At T625 the chain carries Phosphothreonine. Residue K627 forms a Glycyl lysine isopeptide (Lys-Gly) (interchain with G-Cter in SUMO2) linkage. At K632 the chain carries N6-acetyllysine. Residues K645 and K652 each participate in a glycyl lysine isopeptide (Lys-Gly) (interchain with G-Cter in SUMO2) cross-link. Residue K658 is modified to N6-acetyllysine; alternate. K658 participates in a covalent cross-link: Glycyl lysine isopeptide (Lys-Gly) (interchain with G-Cter in SUMO2); alternate. Residue K658 forms a Glycyl lysine isopeptide (Lys-Gly) (interchain with G-Cter in SUMO1); alternate linkage. A Phosphoserine modification is found at S661. K676 is covalently cross-linked (Glycyl lysine isopeptide (Lys-Gly) (interchain with G-Cter in SUMO2)).

In terms of assembly, identified in the spliceosome C complex. Interacts with PPIA/CYPA. Post-translationally, sumoylated. In terms of tissue distribution, expressed in all tissues tested, including liver, heart, lung, skeletal muscle, kidney, stomach, large intestine, small intestine, pancreas, spleen, peritoneal macrophage and thyroid.

It is found in the nucleus matrix. Functionally, pre-mRNA binding protein, binds avidly to poly(G) and poly(U) RNA homopolymers. Involved in splicing. Acts as a receptor for carcinoembryonic antigen in Kupffer cells, may initiate a series of signaling events leading to tyrosine phosphorylation of proteins and induction of IL-1 alpha, IL-6, IL-10 and tumor necrosis factor alpha cytokines. The sequence is that of Heterogeneous nuclear ribonucleoprotein M (Hnrnpm) from Rattus norvegicus (Rat).